Reading from the N-terminus, the 1020-residue chain is Retinoblastoma-related protein (1020 aa).

Composition is skewed to polar residues over residues 382–391 (SPTKTITSPL) and 398–409 (ASHTNGILGSTN). Residues 382–409 (SPTKTITSPLSPHRSPASHTNGILGSTN) are disordered. Positions 415–616 (TPVSTAMTTA…EKGSSMYNSL (202 aa)) are domain A. Positions 415–869 (TPVSTAMTTA…NEIFIPAAKP (455 aa)) are pocket. Residues 617 to 737 (TVARPSLSAE…PGGGGETCAE (121 aa)) are spacer. The segment at 738–869 (TGINIFFSKI…NEIFIPAAKP (132 aa)) is domain B.

Belongs to the retinoblastoma protein (RB) family.

The protein resides in the nucleus. Regulator of biological processes that recruits a histone deacetylase to control gene transcription. May play a role in the entry into mitosis, negatively regulating the cell proliferation. Formation of stable complexes with geminiviridae replication-associated proteins may create a cellular environment which favors viral DNA replication. This chain is Retinoblastoma-related protein (RBR), found in Ricinus communis (Castor bean).